The chain runs to 514 residues: Putative exoglucanase type C (514 aa).

Positions M1–A17 are cleaved as a signal peptide. Residues Q18–F439 are catalytic. Residue E229 is the Nucleophile of the active site. The Proton donor role is filled by E234. The N-linked (GlcNAc...) asparagine glycan is linked to N287. Over residues S408–K424 the composition is skewed to polar residues. Disordered stretches follow at residues S408–P433 and G448–Q485. Residues S440–Q482 form a linker region. The span at A462 to S479 shows a compositional bias: low complexity. The CBM1 domain occupies G478–Q514. Intrachain disulfides connect C486-C503 and C497-C513. N-linked (GlcNAc...) asparagine glycosylation is present at N490.

The protein belongs to the glycosyl hydrolase 7 (cellulase C) family.

The catalysed reaction is Hydrolysis of (1-&gt;4)-beta-D-glucosidic linkages in cellulose and cellotetraose, releasing cellobiose from the non-reducing ends of the chains.. The protein is Putative exoglucanase type C of Fusarium oxysporum (Fusarium vascular wilt).